Consider the following 354-residue polypeptide: Chorismate synthase (354 aa).

Residue Arg48 coordinates NADP(+). Residues 126–128, Ala278, 293–297, and Arg319 contribute to the FMN site; these read RAS and KPIPS.

It belongs to the chorismate synthase family. In terms of assembly, homotetramer. It depends on FMNH2 as a cofactor.

It carries out the reaction 5-O-(1-carboxyvinyl)-3-phosphoshikimate = chorismate + phosphate. It functions in the pathway metabolic intermediate biosynthesis; chorismate biosynthesis; chorismate from D-erythrose 4-phosphate and phosphoenolpyruvate: step 7/7. Functionally, catalyzes the anti-1,4-elimination of the C-3 phosphate and the C-6 proR hydrogen from 5-enolpyruvylshikimate-3-phosphate (EPSP) to yield chorismate, which is the branch point compound that serves as the starting substrate for the three terminal pathways of aromatic amino acid biosynthesis. This reaction introduces a second double bond into the aromatic ring system. This chain is Chorismate synthase, found in Desulfosudis oleivorans (strain DSM 6200 / JCM 39069 / Hxd3) (Desulfococcus oleovorans).